The following is a 329-amino-acid chain: Phosphate acyltransferase (329 aa).

The protein belongs to the PlsX family. As to quaternary structure, homodimer. Probably interacts with PlsY.

It localises to the cytoplasm. It carries out the reaction a fatty acyl-[ACP] + phosphate = an acyl phosphate + holo-[ACP]. It participates in lipid metabolism; phospholipid metabolism. Functionally, catalyzes the reversible formation of acyl-phosphate (acyl-PO(4)) from acyl-[acyl-carrier-protein] (acyl-ACP). This enzyme utilizes acyl-ACP as fatty acyl donor, but not acyl-CoA. The protein is Phosphate acyltransferase of Campylobacter concisus (strain 13826).